The following is a 914-amino-acid chain: Isoleucine--tRNA ligase (914 aa).

The short motif at 57 to 67 (PYANGQIHMGH) is the 'HIGH' region element. Glu554 lines the L-isoleucyl-5'-AMP pocket. The short motif at 595-599 (KMSKS) is the 'KMSKS' region element. Lys598 contributes to the ATP binding site. Positions 883, 886, 904, and 907 each coordinate Zn(2+).

The protein belongs to the class-I aminoacyl-tRNA synthetase family. IleS type 1 subfamily. As to quaternary structure, monomer. The cofactor is Zn(2+).

It is found in the cytoplasm. The catalysed reaction is tRNA(Ile) + L-isoleucine + ATP = L-isoleucyl-tRNA(Ile) + AMP + diphosphate. Catalyzes the attachment of isoleucine to tRNA(Ile). As IleRS can inadvertently accommodate and process structurally similar amino acids such as valine, to avoid such errors it has two additional distinct tRNA(Ile)-dependent editing activities. One activity is designated as 'pretransfer' editing and involves the hydrolysis of activated Val-AMP. The other activity is designated 'posttransfer' editing and involves deacylation of mischarged Val-tRNA(Ile). This is Isoleucine--tRNA ligase from Macrococcus caseolyticus (strain JCSC5402) (Macrococcoides caseolyticum).